The primary structure comprises 104 residues: UPF0145 protein NP_2600A (104 aa).

This sequence belongs to the UPF0145 family.

This is UPF0145 protein NP_2600A from Natronomonas pharaonis (strain ATCC 35678 / DSM 2160 / CIP 103997 / JCM 8858 / NBRC 14720 / NCIMB 2260 / Gabara) (Halobacterium pharaonis).